The following is a 319-amino-acid chain: Ferrochelatase (319 aa).

The Fe cation site is built by His-193 and Glu-274.

Belongs to the ferrochelatase family.

It is found in the cytoplasm. It carries out the reaction heme b + 2 H(+) = protoporphyrin IX + Fe(2+). It functions in the pathway porphyrin-containing compound metabolism; protoheme biosynthesis; protoheme from protoporphyrin-IX: step 1/1. Catalyzes the ferrous insertion into protoporphyrin IX. This chain is Ferrochelatase, found in Actinobacillus pleuropneumoniae serotype 3 (strain JL03).